Consider the following 212-residue polypeptide: Uracil phosphoribosyltransferase (212 aa).

Residues arginine 78, arginine 103, and 130–138 (DPMLATGGS) each bind 5-phospho-alpha-D-ribose 1-diphosphate. Uracil contacts are provided by residues isoleucine 193 and 198 to 200 (GDA). Aspartate 199 contributes to the 5-phospho-alpha-D-ribose 1-diphosphate binding site.

It belongs to the UPRTase family. The cofactor is Mg(2+).

The catalysed reaction is UMP + diphosphate = 5-phospho-alpha-D-ribose 1-diphosphate + uracil. The protein operates within pyrimidine metabolism; UMP biosynthesis via salvage pathway; UMP from uracil: step 1/1. Its activity is regulated as follows. Allosterically activated by GTP. Catalyzes the conversion of uracil and 5-phospho-alpha-D-ribose 1-diphosphate (PRPP) to UMP and diphosphate. The chain is Uracil phosphoribosyltransferase from Stutzerimonas stutzeri (strain A1501) (Pseudomonas stutzeri).